A 234-amino-acid chain; its full sequence is Probable chemoreceptor glutamine deamidase CheD (234 aa).

This sequence belongs to the CheD family.

The catalysed reaction is L-glutaminyl-[protein] + H2O = L-glutamyl-[protein] + NH4(+). In terms of biological role, probably deamidates glutamine residues to glutamate on methyl-accepting chemotaxis receptors (MCPs), playing an important role in chemotaxis. The protein is Probable chemoreceptor glutamine deamidase CheD of Burkholderia mallei (strain NCTC 10247).